A 111-amino-acid polypeptide reads, in one-letter code: BET1-like protein (111 aa).

The Cytoplasmic segment spans residues 1–86; it reads MADWARAQSP…MARSGRDNRK (86 aa). Residues Ser9 and Ser37 each carry the phosphoserine modification. The t-SNARE coiled-coil homology domain occupies 15–77; that stretch reads EILDRENKRM…TGSVKRFSTM (63 aa). Residues 87–107 form a helical; Anchor for type IV membrane protein membrane-spanning segment; the sequence is LLCGVAVGLIVAFFILSYLLS. Topologically, residues 108-111 are lumenal; it reads RART.

In terms of assembly, component of a SNARE complex consisting of STX5, YKT6, GOSR1 and BET1L. Interacts with STX5.

Its subcellular location is the golgi apparatus membrane. The protein resides in the golgi apparatus. It is found in the trans-Golgi network membrane. Functionally, vesicle SNARE required for targeting and fusion of retrograde transport vesicles with the Golgi complex. Required for the integrity of the Golgi complex. The chain is BET1-like protein from Bos taurus (Bovine).